The chain runs to 78 residues: Large ribosomal subunit protein bL28 (78 aa).

The protein belongs to the bacterial ribosomal protein bL28 family.

This is Large ribosomal subunit protein bL28 from Psychrobacter sp. (strain PRwf-1).